The primary structure comprises 130 residues: Con-Ins M1 (130 aa).

Positions 1–21 are cleaved as a signal peptide; the sequence is MTTSSYFLLVALGLLLYVCQS. Disulfide bonds link C29–C107, C41–C110, C53–C123, and C109–C114. P34 is modified (4-hydroxyproline; partial). Residues 59-92 constitute a propeptide, c peptide; that stretch reads AHGGTNDARATTGRALSLSKRRGFLSMLKRRGKR. Residue E118 is modified to 4-carboxyglutamate; partial. S129 is subject to Serine amide.

This sequence belongs to the insulin family. As to quaternary structure, heterodimer of A and B chains; disulfide-linked. As to expression, expressed by the venom gland.

It is found in the secreted. Its function is as follows. This venom insulin facilitates prey capture by rapidly inducing hypoglycemic shock. Intraperitoneal injection of this peptide into zebrafish lowers blood glucose with the same potency than human insulin. In vivo, when applied to water, this peptide reduces overall locomotor activity of zebrafish larvae, observed as a significant decrease in the percentage of time spent swimming and movement frequency. This chain is Con-Ins M1, found in Conus marmoreus (Marble cone).